Consider the following 194-residue polypeptide: Phosphoheptose isomerase (194 aa).

In terms of domain architecture, SIS spans 31–186 (ICQRFQAGNK…CEQVESRLFA (156 aa)). Residue 46–48 (NGG) coordinates substrate. 2 residues coordinate Zn(2+): H55 and E59. Substrate is bound by residues E59, 88–89 (ND), 114–116 (STS), S119, and Q166. Zn(2+)-binding residues include Q166 and H174.

Belongs to the SIS family. GmhA subfamily. Zn(2+) is required as a cofactor.

Its subcellular location is the cytoplasm. It carries out the reaction 2 D-sedoheptulose 7-phosphate = D-glycero-alpha-D-manno-heptose 7-phosphate + D-glycero-beta-D-manno-heptose 7-phosphate. It participates in carbohydrate biosynthesis; D-glycero-D-manno-heptose 7-phosphate biosynthesis; D-glycero-alpha-D-manno-heptose 7-phosphate and D-glycero-beta-D-manno-heptose 7-phosphate from sedoheptulose 7-phosphate: step 1/1. In terms of biological role, catalyzes the isomerization of sedoheptulose 7-phosphate in D-glycero-D-manno-heptose 7-phosphate. This chain is Phosphoheptose isomerase, found in Synechocystis sp. (strain ATCC 27184 / PCC 6803 / Kazusa).